The sequence spans 918 residues: MSLFHHLVSRFLSLWLLIFLVFLVLSLGKSQKEALQVKVGIVLGSNVTLADLSLRAINMSLSEFYNTHNGFKTRIVLNVRDSKQTVVGAAASALYLIKKREVVAIIGPGTSMQAPFLINLGNQSKVPIISFSATSPLLDSLRSPYFIRATHDDSSQVQAISAIIESFRWREVVPIYVDNEFGEGILPNLVDAFQEINVRIRYRSAISLHYSDDQIKKELYKLMTMPTRVFIVHMLPDLGSRLFSIAKEIDMLSKGYVWIVTNGIADLMSIMGESSLVNMHGVLGVKTYFAKSKELLHLEARWQKRFGGEELNNFACWAYDAATALAMSVEEIRHVNMSFNTTKEDTSRDDIGTDLDELGVALSGPKLLDALSTVSFKGVAGRFQLKNGKLEATTFKIINIEESGERTVGFWKSKVGLVKSLRVDKVSHSSRRLRPIIWPGDTIFVPKGWEFPTNAKKLRIAVPKKDGFNNFVEVTKDENTNVPTVTGFCIDVFNTVMSQMPYAVSYEYIPFDTPDGKPRGSYDEMVYNVFLGEFDGAVGDTTILANRSHYVDFALPYSETGIVFLVPVKDGKEKGEWVFLKPLTKELWLVTAASFLYIGIMVWIFEYQADEEFREQMIIDKISSVFYFSFSTLFFAHRRPSESFFTRVLVVVWCFVLLILTQSYTATLTSMLTVQELRPTVRHMDDLRKSGVNIGYQTGSFTFERLKQMRFDESRLKTYNSPEEMRELFLHKSSNGGIDAAFDEVAYIKLFMAKYCSEYSIIEPTFKADGFGFAFPLGSPLVSDISRQILNITEGDAMKAIENKWFLGEKHCLDSTTSDSPIQLDHHSFEALFLIVFVVSVILLLLMLASRGYQERQHNASPNLPNDQANAAQEEVNEEGNVGDHIVEVDTALVRRKKLTSNTIPIRRVAPLSRLKSA.

An N-terminal signal peptide occupies residues 1-30; the sequence is MSLFHHLVSRFLSLWLLIFLVFLVLSLGKS. The Extracellular portion of the chain corresponds to 31-586; sequence QKEALQVKVG…WVFLKPLTKE (556 aa). N-linked (GlcNAc...) asparagine glycosylation is found at Asn-46, Asn-58, Asn-122, Asn-336, Asn-340, and Asn-546. The helical transmembrane segment at 587–607 threads the bilayer; it reads LWLVTAASFLYIGIMVWIFEY. The Cytoplasmic segment spans residues 608 to 616; that stretch reads QADEEFREQ. A helical membrane pass occupies residues 617 to 637; that stretch reads MIIDKISSVFYFSFSTLFFAH. Over 638–647 the chain is Cytoplasmic; that stretch reads RRPSESFFTR. The chain crosses the membrane as a helical span at residues 648 to 668; that stretch reads VLVVVWCFVLLILTQSYTATL. At 669 to 828 the chain is on the extracellular side; it reads TSMLTVQELR…DSPIQLDHHS (160 aa). N-linked (GlcNAc...) asparagine glycosylation occurs at Asn-791. Residues 829–849 form a helical membrane-spanning segment; sequence FEALFLIVFVVSVILLLLMLA. The Cytoplasmic segment spans residues 850–918; the sequence is SRGYQERQHN…VAPLSRLKSA (69 aa). Residues 857 to 881 are disordered; sequence QHNASPNLPNDQANAAQEEVNEEGN. Residues 866–881 are compositionally biased toward low complexity; sequence NDQANAAQEEVNEEGN.

This sequence belongs to the glutamate-gated ion channel (TC 1.A.10.1) family. May form heteromers. In terms of tissue distribution, expressed predominantly in roots.

It is found in the membrane. Functionally, glutamate-gated receptor that probably acts as a non-selective cation channel. May be involved in light-signal transduction and calcium homeostasis via the regulation of calcium influx into cells. This Arabidopsis thaliana (Mouse-ear cress) protein is Glutamate receptor 2.5 (GLR2.5).